A 213-amino-acid polypeptide reads, in one-letter code: Kynurenine formamidase (213 aa).

W18 contributes to the substrate binding site. H48, H52, and D54 together coordinate Zn(2+). Residue H58 is the Proton donor/acceptor of the active site. The Zn(2+) site is built by H160 and E172.

It belongs to the Cyclase 1 superfamily. KynB family. In terms of assembly, homodimer. Zn(2+) is required as a cofactor.

It catalyses the reaction N-formyl-L-kynurenine + H2O = L-kynurenine + formate + H(+). It functions in the pathway amino-acid degradation; L-tryptophan degradation via kynurenine pathway; L-kynurenine from L-tryptophan: step 2/2. Functionally, catalyzes the hydrolysis of N-formyl-L-kynurenine to L-kynurenine, the second step in the kynurenine pathway of tryptophan degradation. This Burkholderia orbicola (strain MC0-3) protein is Kynurenine formamidase.